The sequence spans 124 residues: Holo-[acyl-carrier-protein] synthase (124 aa).

Residues Asp-8 and Glu-56 each coordinate Mg(2+).

The protein belongs to the P-Pant transferase superfamily. AcpS family. It depends on Mg(2+) as a cofactor.

It is found in the cytoplasm. The enzyme catalyses apo-[ACP] + CoA = holo-[ACP] + adenosine 3',5'-bisphosphate + H(+). Functionally, transfers the 4'-phosphopantetheine moiety from coenzyme A to a Ser of acyl-carrier-protein. In Clostridium acetobutylicum (strain ATCC 824 / DSM 792 / JCM 1419 / IAM 19013 / LMG 5710 / NBRC 13948 / NRRL B-527 / VKM B-1787 / 2291 / W), this protein is Holo-[acyl-carrier-protein] synthase.